The following is a 71-amino-acid chain: Small ribosomal subunit protein bS21 (71 aa).

Over residues glutamate 48–arginine 59 the composition is skewed to basic residues. The segment at glutamate 48–tyrosine 71 is disordered. Positions asparagine 60–tyrosine 71 are enriched in basic and acidic residues.

Belongs to the bacterial ribosomal protein bS21 family.

This is Small ribosomal subunit protein bS21 from Glaesserella parasuis serovar 5 (strain SH0165) (Haemophilus parasuis).